Here is a 161-residue protein sequence, read N- to C-terminus: Crossover junction endodeoxyribonuclease RuvC (161 aa).

Residues Asp-7, Glu-67, and Asp-140 contribute to the active site. Residues Asp-7, Glu-67, and Asp-140 each coordinate Mg(2+).

It belongs to the RuvC family. As to quaternary structure, homodimer which binds Holliday junction (HJ) DNA. The HJ becomes 2-fold symmetrical on binding to RuvC with unstacked arms; it has a different conformation from HJ DNA in complex with RuvA. In the full resolvosome a probable DNA-RuvA(4)-RuvB(12)-RuvC(2) complex forms which resolves the HJ. Mg(2+) is required as a cofactor.

The protein localises to the cytoplasm. The enzyme catalyses Endonucleolytic cleavage at a junction such as a reciprocal single-stranded crossover between two homologous DNA duplexes (Holliday junction).. Functionally, the RuvA-RuvB-RuvC complex processes Holliday junction (HJ) DNA during genetic recombination and DNA repair. Endonuclease that resolves HJ intermediates. Cleaves cruciform DNA by making single-stranded nicks across the HJ at symmetrical positions within the homologous arms, yielding a 5'-phosphate and a 3'-hydroxyl group; requires a central core of homology in the junction. The consensus cleavage sequence is 5'-(A/T)TT(C/G)-3'. Cleavage occurs on the 3'-side of the TT dinucleotide at the point of strand exchange. HJ branch migration catalyzed by RuvA-RuvB allows RuvC to scan DNA until it finds its consensus sequence, where it cleaves and resolves the cruciform DNA. The polypeptide is Crossover junction endodeoxyribonuclease RuvC (Natranaerobius thermophilus (strain ATCC BAA-1301 / DSM 18059 / JW/NM-WN-LF)).